The following is a 254-amino-acid chain: 3-deoxy-manno-octulosonate cytidylyltransferase (254 aa).

It belongs to the KdsB family.

It is found in the cytoplasm. The enzyme catalyses 3-deoxy-alpha-D-manno-oct-2-ulosonate + CTP = CMP-3-deoxy-beta-D-manno-octulosonate + diphosphate. The protein operates within nucleotide-sugar biosynthesis; CMP-3-deoxy-D-manno-octulosonate biosynthesis; CMP-3-deoxy-D-manno-octulosonate from 3-deoxy-D-manno-octulosonate and CTP: step 1/1. It functions in the pathway bacterial outer membrane biogenesis; lipopolysaccharide biosynthesis. In terms of biological role, activates KDO (a required 8-carbon sugar) for incorporation into bacterial lipopolysaccharide in Gram-negative bacteria. The protein is 3-deoxy-manno-octulosonate cytidylyltransferase of Pseudomonas putida (strain GB-1).